Reading from the N-terminus, the 331-residue chain is Holliday junction branch migration complex subunit RuvB (331 aa).

The interval 1 to 182 (MSNDTLHKYE…FGIPLHLEFY (182 aa)) is large ATPase domain (RuvB-L). ATP is bound by residues Leu21, Arg22, Gly63, Lys66, Thr67, Thr68, 129–131 (EDY), Arg172, Tyr182, and Arg219. Thr67 serves as a coordination point for Mg(2+). The segment at 183 to 254 (SVDELVLVIK…FANSALFRLG (72 aa)) is small ATPAse domain (RuvB-S). The tract at residues 257 to 331 (GAGFDKMDLK…FEYLLSSKYI (75 aa)) is head domain (RuvB-H). 2 residues coordinate DNA: Arg310 and Arg315.

The protein belongs to the RuvB family. In terms of assembly, homohexamer. Forms an RuvA(8)-RuvB(12)-Holliday junction (HJ) complex. HJ DNA is sandwiched between 2 RuvA tetramers; dsDNA enters through RuvA and exits via RuvB. An RuvB hexamer assembles on each DNA strand where it exits the tetramer. Each RuvB hexamer is contacted by two RuvA subunits (via domain III) on 2 adjacent RuvB subunits; this complex drives branch migration. In the full resolvosome a probable DNA-RuvA(4)-RuvB(12)-RuvC(2) complex forms which resolves the HJ.

It is found in the cytoplasm. The catalysed reaction is ATP + H2O = ADP + phosphate + H(+). In terms of biological role, the RuvA-RuvB-RuvC complex processes Holliday junction (HJ) DNA during genetic recombination and DNA repair, while the RuvA-RuvB complex plays an important role in the rescue of blocked DNA replication forks via replication fork reversal (RFR). RuvA specifically binds to HJ cruciform DNA, conferring on it an open structure. The RuvB hexamer acts as an ATP-dependent pump, pulling dsDNA into and through the RuvAB complex. RuvB forms 2 homohexamers on either side of HJ DNA bound by 1 or 2 RuvA tetramers; 4 subunits per hexamer contact DNA at a time. Coordinated motions by a converter formed by DNA-disengaged RuvB subunits stimulates ATP hydrolysis and nucleotide exchange. Immobilization of the converter enables RuvB to convert the ATP-contained energy into a lever motion, pulling 2 nucleotides of DNA out of the RuvA tetramer per ATP hydrolyzed, thus driving DNA branch migration. The RuvB motors rotate together with the DNA substrate, which together with the progressing nucleotide cycle form the mechanistic basis for DNA recombination by continuous HJ branch migration. Branch migration allows RuvC to scan DNA until it finds its consensus sequence, where it cleaves and resolves cruciform DNA. The sequence is that of Holliday junction branch migration complex subunit RuvB from Anaplasma marginale (strain Florida).